We begin with the raw amino-acid sequence, 116 residues long: Large ribosomal subunit protein bL19 (116 aa).

It belongs to the bacterial ribosomal protein bL19 family.

Its function is as follows. This protein is located at the 30S-50S ribosomal subunit interface and may play a role in the structure and function of the aminoacyl-tRNA binding site. This is Large ribosomal subunit protein bL19 from Streptomyces griseus subsp. griseus (strain JCM 4626 / CBS 651.72 / NBRC 13350 / KCC S-0626 / ISP 5235).